A 310-amino-acid chain; its full sequence is Probable cobalamin biosynthesis protein CobD (310 aa).

The next 5 helical transmembrane spans lie at 53–73 (LVFG…IFFT), 80–100 (LISN…FSIG), 157–177 (DSII…AFIY), 215–235 (IAGI…VPAI), and 289–309 (AVDY…FNLI).

This sequence belongs to the CobD/CbiB family.

It is found in the cell membrane. It participates in cofactor biosynthesis; adenosylcobalamin biosynthesis. Its function is as follows. Converts cobyric acid to cobinamide by the addition of aminopropanol on the F carboxylic group. The protein is Probable cobalamin biosynthesis protein CobD of Methanococcus vannielii (strain ATCC 35089 / DSM 1224 / JCM 13029 / OCM 148 / SB).